A 74-amino-acid chain; its full sequence is Mitochondrial import receptor subunit TOM6 homolog (74 aa).

Positions 1–20 (MASSGVTVSAAGSASEASEV) are enriched in low complexity. The segment at 1-21 (MASSGVTVSAAGSASEASEVP) is disordered. A2 is subject to N-acetylalanine.

It belongs to the Tom6 family. In terms of assembly, forms part of the preprotein translocase complex of the outer mitochondrial membrane (TOM complex) which consists of at least 7 different proteins (TOMM5, TOMM6, TOMM7, TOMM20, TOMM22, TOMM40 and TOMM70).

Its subcellular location is the mitochondrion outer membrane. This is Mitochondrial import receptor subunit TOM6 homolog (Tomm6) from Mus musculus (Mouse).